The sequence spans 447 residues: Cysteine--tRNA ligase (447 aa).

Position 28 (C28) interacts with Zn(2+). The 'HIGH' region motif lies at 30-40; the sequence is PTVYNYIHVGN. 3 residues coordinate Zn(2+): C211, H236, and E240. The 'KMSKS' region signature appears at 268–272; it reads KMSKS. Position 271 (K271) interacts with ATP.

The protein belongs to the class-I aminoacyl-tRNA synthetase family. As to quaternary structure, monomer. The cofactor is Zn(2+).

The protein resides in the cytoplasm. The enzyme catalyses tRNA(Cys) + L-cysteine + ATP = L-cysteinyl-tRNA(Cys) + AMP + diphosphate. The chain is Cysteine--tRNA ligase from Streptococcus mutans serotype c (strain ATCC 700610 / UA159).